Here is a 187-residue protein sequence, read N- to C-terminus: dCTP deaminase (187 aa).

DCTP is bound by residues 110–115, 134–136, Gln155, Tyr169, and Gln179; these read KSTYAR and TLE. Glu136 (proton donor/acceptor) is an active-site residue.

The protein belongs to the dCTP deaminase family. As to quaternary structure, homotrimer.

It catalyses the reaction dCTP + H2O + H(+) = dUTP + NH4(+). It functions in the pathway pyrimidine metabolism; dUMP biosynthesis; dUMP from dCTP (dUTP route): step 1/2. Catalyzes the deamination of dCTP to dUTP. The chain is dCTP deaminase from Bordetella bronchiseptica (strain ATCC BAA-588 / NCTC 13252 / RB50) (Alcaligenes bronchisepticus).